Reading from the N-terminus, the 337-residue chain is MRRGWKMALSGGLRCCRRVLSWVPVLVIVLVVLWSYYAYVFELCLVTVLSPAEKVIYLILYHAIFVFFTWTYWKSIFTLPQQPNQKFHLSYTDKERYENEERPEVQKQMLVDMAKKLPVYTRTGSGAVRFCDRCHLIKPDRCHHCSVCAMCVLKMDHHCPWVNNCIGFSNYKFFLQFLAYSVLYCLYIATTVFSYFIKYWRGELPSVRSKFHVLFLLFVACMFFVSLVILFGYHCWLVSRNKTTLEAFCTPVFTSGPEKNGFNLGFIKNIQQVFGDKKKFWLIPIGSSPGDGHSFPMRSMNESQNPLLANEETWEDNEDDNQDYPEGSSSLAVETET.

The Cytoplasmic segment spans residues 1–20; sequence MRRGWKMALSGGLRCCRRVL. The chain crosses the membrane as a helical span at residues 21–41; sequence SWVPVLVIVLVVLWSYYAYVF. The Lumenal portion of the chain corresponds to 42–56; sequence ELCLVTVLSPAEKVI. The helical transmembrane segment at 57 to 77 threads the bilayer; the sequence is YLILYHAIFVFFTWTYWKSIF. Over 78–172 the chain is Cytoplasmic; the sequence is TLPQQPNQKF…NNCIGFSNYK (95 aa). A DHHC domain is found at 129-179; that stretch reads RFCDRCHLIKPDRCHHCSVCAMCVLKMDHHCPWVNNCIGFSNYKFFLQFLA. Residues cysteine 131, cysteine 134, histidine 144, cysteine 145, cysteine 148, cysteine 151, and histidine 158 each contribute to the Zn(2+) site. The active-site S-palmitoyl cysteine intermediate is cysteine 159. Cysteine 165 serves as a coordination point for Zn(2+). The helical transmembrane segment at 173–193 threads the bilayer; the sequence is FFLQFLAYSVLYCLYIATTVF. The Lumenal portion of the chain corresponds to 194–210; the sequence is SYFIKYWRGELPSVRSK. A helical membrane pass occupies residues 211 to 234; the sequence is FHVLFLLFVACMFFVSLVILFGYH. Topologically, residues 235–337 are cytoplasmic; it reads CWLVSRNKTT…SSSLAVETET (103 aa). Residues 306–337 form a disordered region; sequence PLLANEETWEDNEDDNQDYPEGSSSLAVETET. Residues 312–323 show a composition bias toward acidic residues; it reads ETWEDNEDDNQD. Over residues 327–337 the composition is skewed to polar residues; that stretch reads GSSSLAVETET.

This sequence belongs to the DHHC palmitoyltransferase family. Post-translationally, autopalmitoylated (in vitro). As to expression, expressed in placenta, liver, lung, kidney, heart and brain.

The protein localises to the golgi apparatus membrane. It localises to the postsynaptic density. The catalysed reaction is L-cysteinyl-[protein] + hexadecanoyl-CoA = S-hexadecanoyl-L-cysteinyl-[protein] + CoA. It carries out the reaction L-cysteinyl-[protein] + tetradecanoyl-CoA = S-tetradecanoyl-L-cysteinyl-[protein] + CoA. The enzyme catalyses L-cysteinyl-[protein] + octadecanoyl-CoA = S-octadecanoyl-L-cysteinyl-[protein] + CoA. Its function is as follows. Palmitoyltransferase that catalyzes the addition of palmitate onto various protein substrates. Has no stringent fatty acid selectivity and in addition to palmitate can also transfer onto target proteins myristate from tetradecanoyl-CoA and stearate from octadecanoyl-CoA. Palmitoylates IGF2R and SORT1, promoting their partitioning to an endosomal membrane subdomain where they can interact with the retromer cargo-selective complex. Thereby, regulates retrograde transport from endosomes to the Golgi apparatus of these lysosomal sorting receptors and plays a role in trafficking of lysosomal proteins. In the nervous system, catalyzes the palmitoylation of DLG4/PSD95 and regulates its synaptic clustering and function in synaptogenesis. Could be involved in the differentiation of dopaminergic neurons and the development of the diencephalon. Could also catalyze the palmitoylation of GAP43. Could also palmitoylate DNAJC5 and regulate its localization to the Golgi membrane. Could also palmitoylate FYN as shown in vitro. May palmitoylate CALHM3 subunit of gustatory voltage-gated ion channels and modulate channel gating and kinetics. This chain is Palmitoyltransferase ZDHHC15, found in Homo sapiens (Human).